We begin with the raw amino-acid sequence, 226 residues long: 26S proteasome non-ATPase regulatory subunit 10 (226 aa).

The required for nuclear localization stretch occupies residues 1–37; sequence MEGCVSNLMVCNLAYSGKLEELKESILADKSLATRTD. Residues 1-71 are interaction with RB1; sequence MEGCVSNLMV…LGVPVNDKDD (71 aa). ANK repeat units lie at residues 3–36, 37–69, 70–102, 103–135, 136–168, 169–201, and 202–226; these read GCVSNLMVCNLAYSGKLEELKESILADKSLATRT, DQDSRTALHWACSAGHTEIVEFLLQLGVPVNDK, DDAGWSPLHIAASAGRDEIVKALLGKGAQVNAV, NQNGCTPLHYAASKNRHEIAVMLLEGGANPDAK, DHYEATAMHRAAAKGNLKMIHILLYYKASTNIQ, DTEGNTPLHLACDEERVEEAKLLVSQGASIYIE, and NKEEKTPLQVAKGGLGLILKRMVEG. Residues 39 to 226 form an interaction with RELA region; sequence DSRTALHWAC…GLILKRMVEG (188 aa). An interaction with RB1 region spans residues 171-226; that stretch reads EGNTPLHLACDEERVEEAKLLVSQGASIYIENKEEKTPLQVAKGGLGLILKRMVEG.

Part of transient complex containing PSMD10, PSMC4, PSMC5 and PAAF1 formed during the assembly of the 26S proteasome. Stays associated throughout the assembly of the PA700/19S RC and is released upon association with the 20S core. Interacts with PSMC4. Interacts with RB1. Interacts with CDK4. Interacts with MDM2. Interacts with RELA. Associates with a CDK4:CCND2 serine/threonine kinase complex. Interacts with ARHGDIA and increases the interaction between ARHGDIA and RHOA, hence promotes ARHGDIA inactivation of RHOA and ROCK. Tends to be up-regulated in cancer cells with RAS mutations, including lung cancers and adenocarconimas (at protein level).

The protein resides in the cytoplasm. Its subcellular location is the nucleus. Acts as a chaperone during the assembly of the 26S proteasome, specifically of the PA700/19S regulatory complex (RC). In the initial step of the base subcomplex assembly is part of an intermediate PSMD10:PSMC4:PSMC5:PAAF1 module which probably assembles with a PSMD5:PSMC2:PSMC1:PSMD2 module. Independently of the proteasome, regulates EGF-induced AKT activation through inhibition of the RHOA/ROCK/PTEN pathway, leading to prolonged AKT activation. Plays an important role in RAS-induced tumorigenesis. Its function is as follows. Acts as an proto-oncoprotein by being involved in negative regulation of tumor suppressors RB1 and p53/TP53. Overexpression is leading to phosphorylation of RB1 and proteasomal degradation of RB1. Regulates CDK4-mediated phosphorylation of RB1 by competing with CDKN2A for binding with CDK4. Facilitates binding of MDM2 to p53/TP53 and the mono- and polyubiquitination of p53/TP53 by MDM2 suggesting a function in targeting the TP53:MDM2 complex to the 26S proteasome. Involved in p53-independent apoptosis. Involved in regulation of NF-kappa-B by retaining it in the cytoplasm. Binds to the NF-kappa-B component RELA and accelerates its XPO1/CRM1-mediated nuclear export. In Homo sapiens (Human), this protein is 26S proteasome non-ATPase regulatory subunit 10 (PSMD10).